The primary structure comprises 124 residues: Seripauperin-15 (124 aa).

An N-terminal signal peptide occupies residues M1–A20.

This sequence belongs to the SRP1/TIP1 family. Seripauperin subfamily.

The protein is Seripauperin-15 (PAU15) of Saccharomyces cerevisiae (strain ATCC 204508 / S288c) (Baker's yeast).